Reading from the N-terminus, the 536-residue chain is Portal protein (536 aa).

The protein belongs to the podoviridae portal protein family. In terms of assembly, homododecamer. Interacts with major capsid protein. Interacts with the tail tube protein gp11. Interacts with the terminase large subunit. Interacts with the internal virion protein gp14.

The protein localises to the virion. Forms the portal vertex of the capsid. This portal plays critical roles in head assembly, genome packaging, neck/tail attachment, and genome ejection. The portal protein multimerizes as a single ring-shaped homododecamer arranged around a central channel. This is Portal protein from Escherichia phage T7 (Bacteriophage T7).